Here is a 207-residue protein sequence, read N- to C-terminus: MLVYWLDIVGTAVFAISGVLLAGKLRMDPFGVLVLGVVTAVGGGTIRDMALDHGPVFWVKDPTDLVVAMVTSMLTIVLVRQPRRLPKWMLPVLDAVGLAVFVGIGVNKAFNAEAGPLIAVCMGVITGVGGGIIRDVLAREIPMILRTEIYATACIIGGIVHATAYYTFSVPLETASMMGMVVTLLIRLAAIRWHLKLPTFALDENGR.

Residues 1–21 (MLVYWLDIVGTAVFAISGVLL) form a helical membrane-spanning segment. At 22–29 (AGKLRMDP) the chain is on the cytoplasmic side. A helical membrane pass occupies residues 30–50 (FGVLVLGVVTAVGGGTIRDMA). The Periplasmic portion of the chain corresponds to 51–58 (LDHGPVFW). Residues 59–79 (VKDPTDLVVAMVTSMLTIVLV) form a helical membrane-spanning segment. Residues 80-85 (RQPRRL) lie on the Cytoplasmic side of the membrane. A helical membrane pass occupies residues 86-106 (PKWMLPVLDAVGLAVFVGIGV). Topologically, residues 107–112 (NKAFNA) are periplasmic. The chain crosses the membrane as a helical span at residues 113–133 (EAGPLIAVCMGVITGVGGGII). The Cytoplasmic segment spans residues 134-148 (RDVLAREIPMILRTE). Residues 149–169 (IYATACIIGGIVHATAYYTFS) traverse the membrane as a helical segment. Residue V170 is a topological domain, periplasmic. The helical transmembrane segment at 171–191 (PLETASMMGMVVTLLIRLAAI) threads the bilayer. The Cytoplasmic segment spans residues 192 to 207 (RWHLKLPTFALDENGR).

This sequence belongs to the UPF0126 family.

The protein localises to the cell inner membrane. The protein is UPF0126 inner membrane protein YadS (yadS) of Escherichia coli O6:H1 (strain CFT073 / ATCC 700928 / UPEC).